We begin with the raw amino-acid sequence, 389 residues long: NAD-dependent protein deacetylase sirtuin-2 (389 aa).

A disordered region spans residues 1 to 34 (MAEPDPSHPLETQAGKVQEAQDSDSDSEGGAAGG). A2 bears the N-acetylalanine mark. S23, S25, and S27 each carry phosphoserine. The short motif at 41–51 (LRNLFSQTLSL) is the Nuclear export signal element. Position 53 is a phosphoserine (S53). In terms of domain architecture, Deacetylase sirtuin-type spans 57-338 (RLLDELTLEG…LALAELLGWK (282 aa)). NAD(+) contacts are provided by residues 85–89 (AGIST) and 95–97 (DFR). S100 carries the phosphoserine modification. 167–170 (QNID) lines the NAD(+) pocket. H187 acts as the Proton acceptor in catalysis. The Zn(2+) site is built by C195 and C200. S207 carries the post-translational modification Phosphoserine. Zn(2+) is bound by residues C221 and C224. NAD(+) contacts are provided by residues 262–263 (TS), 286–288 (NKE), and C324. The tract at residues 351 to 389 (SIDAQSGAGVPNPSTSASPKKSPPPAKDEARTTEREKPQ) is disordered. The span at 361 to 370 (PNPSTSASPK) shows a compositional bias: low complexity. Phosphoserine; by CDK2 and CDK5 is present on S368. Position 372 is a phosphoserine (S372). The span at 376–389 (AKDEARTTEREKPQ) shows a compositional bias: basic and acidic residues.

The protein belongs to the sirtuin family. Class I subfamily. Interacts with CDC20, FOXO3 and FZR1. Associates with microtubules in primary cortical mature neurons. Homotrimer. Isoform 1 and isoform 2 interact (via both phosphorylated, unphosphorylated, active or inactive forms) with HDAC6; the interaction is necessary for the complex to interact with alpha-tubulin, suggesting that these proteins belong to a large complex that deacetylates the cytoskeleton. Interacts with FOXO1; the interaction is disrupted upon serum-starvation or oxidative stress, leading to increased level of acetylated FOXO1 and induction of autophagy. Interacts with RELA; the interaction occurs in the cytoplasm and is increased in a TNF-alpha-dependent manner. Interacts with HOXA10; the interaction is direct. Interacts with YWHAB and YWHAG; the interactions occur in a AKT-dependent manner and increase SIRT2-dependent TP53 deacetylation. Interacts with MAPK1/ERK2 and MAPK3/ERK1; the interactions increase SIRT2 stability and deacetylation activity. Interacts (phosphorylated form) with KMT5A isoform 2; the interaction is direct, stimulates KMT5A-mediated methyltransferase activity on histone at 'Lys-20' (H4K20me1) and is increased in a H(2)O(2)-induced oxidative stress-dependent manner. Interacts with G6PD; the interaction is enhanced by H(2)O(2) treatment. Interacts with a G1/S-specific cyclin E-CDK2 complex. Interacts with AURKA, CDK5R1 (p35 form) and CDK5 and HIF1A. Isoform 1, isoform 2 and isoform 5 interact (via C-terminus region) with EP300. Interacts with the tRNA ligase SARS1; recruited to the VEGFA promoter via interaction with SARS1. Interacts with BEX4; negatively regulates alpha-tubulin deacetylation by SIRT2. Requires Zn(2+) as cofactor. In terms of processing, phosphorylated at phosphoserine and phosphothreonine. Phosphorylated at Ser-368 by a mitotic kinase CDK1/cyclin B at the G2/M transition; phosphorylation regulates the delay in cell-cycle progression. Phosphorylated at Ser-368 by a mitotic kinase G1/S-specific cyclin E/Cdk2 complex; phosphorylation inactivates SIRT2-mediated alpha-tubulin deacetylation and thereby negatively regulates cell adhesion, cell migration and neurite outgrowth during neuronal differentiation. Phosphorylated by cyclin A/Cdk2 and p35-Cdk5 complexes and to a lesser extent by the cyclin D3/Cdk4 and cyclin B/Cdk1, in vitro. Dephosphorylated at Ser-368 by CDC14A and CDC14B around early anaphase. Post-translationally, acetylated by EP300; acetylation leads both to the decreased of SIRT2-mediated alpha-tubulin deacetylase activity and SIRT2-mediated down-regulation of TP53 transcriptional activity. Ubiquitinated. Isoform 1 is expressed in heart, liver and skeletal muscle, weakly expressed in the cortex. Isoform 2 is strongly expressed in the cortex, weakly expressed in heart and liver. Weakly expressed in several malignancies including breast, liver, brain, kidney and prostate cancers compared to normal tissues. Weakly expressed in glioma cell lines compared to normal brain tissues (at protein level). Widely expressed. Highly expressed in heart, brain and skeletal muscle, while it is weakly expressed in placenta and lung. Down-regulated in many gliomas suggesting that it may act as a tumor suppressor gene in human gliomas possibly through the regulation of microtubule network.

The protein resides in the nucleus. The protein localises to the cytoplasm. Its subcellular location is the perinuclear region. It localises to the cytoskeleton. It is found in the microtubule organizing center. The protein resides in the centrosome. The protein localises to the centriole. Its subcellular location is the spindle. It localises to the midbody. It is found in the chromosome. The protein resides in the perikaryon. The protein localises to the cell projection. Its subcellular location is the growth cone. It localises to the myelin membrane. It catalyses the reaction N(6)-acetyl-L-lysyl-[protein] + NAD(+) + H2O = 2''-O-acetyl-ADP-D-ribose + nicotinamide + L-lysyl-[protein]. It carries out the reaction N(6)-tetradecanoyl-L-lysyl-[protein] + NAD(+) + H2O = 2''-O-tetradecanoyl-ADP-D-ribose + nicotinamide + L-lysyl-[protein]. The enzyme catalyses N(6)-hexadecanoyl-L-lysyl-[protein] + NAD(+) + H2O = 2''-O-hexadecanoyl-ADP-D-ribose + nicotinamide + L-lysyl-[protein]. Its activity is regulated as follows. Inhibited by Sirtinol, A3 and M15 small molecules. Inhibited by nicotinamide. Inhibited by a macrocyclic peptide inhibitor S2iL5. Inhibited by EP300-induced acetylation. NAD-dependent protein deacetylase, which deacetylates internal lysines on histone and alpha-tubulin as well as many other proteins such as key transcription factors. Participates in the modulation of multiple and diverse biological processes such as cell cycle control, genomic integrity, microtubule dynamics, cell differentiation, metabolic networks, and autophagy. Plays a major role in the control of cell cycle progression and genomic stability. Functions in the antephase checkpoint preventing precocious mitotic entry in response to microtubule stress agents, and hence allowing proper inheritance of chromosomes. Positively regulates the anaphase promoting complex/cyclosome (APC/C) ubiquitin ligase complex activity by deacetylating CDC20 and FZR1, then allowing progression through mitosis. Associates both with chromatin at transcriptional start sites (TSSs) and enhancers of active genes. Plays a role in cell cycle and chromatin compaction through epigenetic modulation of the regulation of histone H4 'Lys-20' methylation (H4K20me1) during early mitosis. Specifically deacetylates histone H4 at 'Lys-16' (H4K16ac) between the G2/M transition and metaphase enabling H4K20me1 deposition by KMT5A leading to ulterior levels of H4K20me2 and H4K20me3 deposition throughout cell cycle, and mitotic S-phase progression. Deacetylates KMT5A modulating KMT5A chromatin localization during the mitotic stress response. Also deacetylates histone H3 at 'Lys-57' (H3K56ac) during the mitotic G2/M transition. Upon bacterium Listeria monocytogenes infection, deacetylates 'Lys-18' of histone H3 in a receptor tyrosine kinase MET- and PI3K/Akt-dependent manner, thereby inhibiting transcriptional activity and promoting late stages of listeria infection. During oocyte meiosis progression, may deacetylate histone H4 at 'Lys-16' (H4K16ac) and alpha-tubulin, regulating spindle assembly and chromosome alignment by influencing microtubule dynamics and kinetochore function. Deacetylates histone H4 at 'Lys-16' (H4K16ac) at the VEGFA promoter and thereby contributes to regulate expression of VEGFA, a key regulator of angiogenesis. Deacetylates alpha-tubulin at 'Lys-40' and hence controls neuronal motility, oligodendroglial cell arbor projection processes and proliferation of non-neuronal cells. Phosphorylation at Ser-368 by a G1/S-specific cyclin E-CDK2 complex inactivates SIRT2-mediated alpha-tubulin deacetylation, negatively regulating cell adhesion, cell migration and neurite outgrowth during neuronal differentiation. Deacetylates PARD3 and participates in the regulation of Schwann cell peripheral myelination formation during early postnatal development and during postinjury remyelination. Involved in several cellular metabolic pathways. Plays a role in the regulation of blood glucose homeostasis by deacetylating and stabilizing phosphoenolpyruvate carboxykinase PCK1 activity in response to low nutrient availability. Acts as a key regulator in the pentose phosphate pathway (PPP) by deacetylating and activating the glucose-6-phosphate G6PD enzyme, and therefore, stimulates the production of cytosolic NADPH to counteract oxidative damage. Maintains energy homeostasis in response to nutrient deprivation as well as energy expenditure by inhibiting adipogenesis and promoting lipolysis. Attenuates adipocyte differentiation by deacetylating and promoting FOXO1 interaction to PPARG and subsequent repression of PPARG-dependent transcriptional activity. Plays a role in the regulation of lysosome-mediated degradation of protein aggregates by autophagy in neuronal cells. Deacetylates FOXO1 in response to oxidative stress or serum deprivation, thereby negatively regulating FOXO1-mediated autophagy. Deacetylates a broad range of transcription factors and co-regulators regulating target gene expression. Deacetylates transcriptional factor FOXO3 stimulating the ubiquitin ligase SCF(SKP2)-mediated FOXO3 ubiquitination and degradation. Deacetylates HIF1A and therefore promotes HIF1A degradation and inhibition of HIF1A transcriptional activity in tumor cells in response to hypoxia. Deacetylates RELA in the cytoplasm inhibiting NF-kappaB-dependent transcription activation upon TNF-alpha stimulation. Inhibits transcriptional activation by deacetylating p53/TP53 and EP300. Also deacetylates EIF5A. Functions as a negative regulator on oxidative stress-tolerance in response to anoxia-reoxygenation conditions. Plays a role as tumor suppressor. In addition to protein deacetylase activity, also has activity toward long-chain fatty acyl groups and mediates protein-lysine demyristoylation and depalmitoylation of target proteins, such as ARF6 and KRAS, thereby regulating their association with membranes. Functionally, deacetylates EP300, alpha-tubulin and histone H3 and H4. Its function is as follows. Lacks deacetylation activity, at least toward known SIRT2 targets. This chain is NAD-dependent protein deacetylase sirtuin-2 (SIRT2), found in Homo sapiens (Human).